Here is a 361-residue protein sequence, read N- to C-terminus: Diacylglycerol O-acyltransferase 2 (361 aa).

The Cytoplasmic portion of the chain corresponds to Met-1–Gln-42. The helical transmembrane segment at Val-43–Ser-61 threads the bilayer. Residues Val-62–Met-65 are Lumenal-facing. A helical membrane pass occupies residues Tyr-66 to Phe-85. The Cytoplasmic portion of the chain corresponds to Asp-86–Asn-361.

The protein belongs to the diacylglycerol acyltransferase family. In terms of assembly, forms multimeric complexes consisting of several DGAT2 subunits. Interacts with SLC27A1 and this interaction is enhanced in the presence of ZFYVE1.

The protein localises to the endoplasmic reticulum membrane. It localises to the lipid droplet. Its subcellular location is the cytoplasm. The protein resides in the perinuclear region. The catalysed reaction is an acyl-CoA + a 1,2-diacyl-sn-glycerol = a triacyl-sn-glycerol + CoA. It carries out the reaction all-trans-retinol + an acyl-CoA = an all-trans-retinyl ester + CoA. The enzyme catalyses 2-(9Z-octadecenoyl)-glycerol + (9Z)-octadecenoyl-CoA = 1,2-di-(9Z-octadecenoyl)-sn-glycerol + CoA. It catalyses the reaction 1,2-di-(9Z-octadecenoyl)-sn-glycerol + (9Z)-octadecenoyl-CoA = 1,2,3-tri-(9Z-octadecenoyl)-glycerol + CoA. The catalysed reaction is all-trans-retinol + hexadecanoyl-CoA = all-trans-retinyl hexadecanoate + CoA. It carries out the reaction 1-O-(9Z-octadecenyl)-glycerol + (9Z)-octadecenoyl-CoA = 1-O-(9Z-octadecyl)-3-(9Z-octadecenoyl)-glycerol + CoA. The enzyme catalyses 1-(9Z-octadecenoyl)-glycerol + (9Z)-octadecenoyl-CoA = 1,2-di-(9Z-octadecenoyl)-glycerol + CoA. It catalyses the reaction 1,2-di-(9Z-octadecenoyl)-sn-glycerol + hexadecanoyl-CoA = 1,2-di-(9Z)-octadecenoyl-3-hexadecanoyl-sn-glycerol + CoA. The catalysed reaction is 1,3-di-(9Z-octadecenoyl)-glycerol + (9Z)-octadecenoyl-CoA = 1,2,3-tri-(9Z-octadecenoyl)-glycerol + CoA. It carries out the reaction 2,3-di-(9Z)-octadecenoyl-sn-glycerol + (9Z)-octadecenoyl-CoA = 1,2,3-tri-(9Z-octadecenoyl)-glycerol + CoA. The enzyme catalyses 2-(9Z-octadecenoyl)-glycerol + hexadecanoyl-CoA = 1-hexadecanoyl-2-(9Z-octadecenoyl)-sn-glycerol + CoA. It functions in the pathway glycerolipid metabolism; triacylglycerol biosynthesis. Inhibited by niacin. In terms of biological role, essential acyltransferase that catalyzes the terminal and only committed step in triacylglycerol synthesis by using diacylglycerol and fatty acyl CoA as substrates. Required for synthesis and storage of intracellular triglycerides. Probably plays a central role in cytosolic lipid accumulation. In liver, is primarily responsible for incorporating endogenously synthesized fatty acids into triglycerides. Also functions as an acyl-CoA retinol acyltransferase (ARAT). Also able to use 1-monoalkylglycerol (1-MAkG) as an acyl acceptor for the synthesis of monoalkyl-monoacylglycerol (MAMAG). The polypeptide is Diacylglycerol O-acyltransferase 2 (DGAT2) (Bos taurus (Bovine)).